Consider the following 417-residue polypeptide: Gamma-glutamyl phosphate reductase (417 aa).

It belongs to the gamma-glutamyl phosphate reductase family.

Its subcellular location is the cytoplasm. It catalyses the reaction L-glutamate 5-semialdehyde + phosphate + NADP(+) = L-glutamyl 5-phosphate + NADPH + H(+). The protein operates within amino-acid biosynthesis; L-proline biosynthesis; L-glutamate 5-semialdehyde from L-glutamate: step 2/2. Functionally, catalyzes the NADPH-dependent reduction of L-glutamate 5-phosphate into L-glutamate 5-semialdehyde and phosphate. The product spontaneously undergoes cyclization to form 1-pyrroline-5-carboxylate. In Legionella pneumophila (strain Paris), this protein is Gamma-glutamyl phosphate reductase.